The following is a 207-amino-acid chain: Large ribosomal subunit protein bL25 (207 aa).

The protein belongs to the bacterial ribosomal protein bL25 family. CTC subfamily. As to quaternary structure, part of the 50S ribosomal subunit; part of the 5S rRNA/L5/L18/L25 subcomplex. Contacts the 5S rRNA. Binds to the 5S rRNA independently of L5 and L18.

Its function is as follows. This is one of the proteins that binds to the 5S RNA in the ribosome where it forms part of the central protuberance. The chain is Large ribosomal subunit protein bL25 from Dictyoglomus turgidum (strain DSM 6724 / Z-1310).